Here is a 405-residue protein sequence, read N- to C-terminus: Arginine biosynthesis bifunctional protein ArgJ (405 aa).

Substrate contacts are provided by T152, K178, T189, E276, N400, and T405. T189 serves as the catalytic Nucleophile.

It belongs to the ArgJ family. In terms of assembly, heterotetramer of two alpha and two beta chains.

The protein localises to the cytoplasm. The enzyme catalyses N(2)-acetyl-L-ornithine + L-glutamate = N-acetyl-L-glutamate + L-ornithine. It carries out the reaction L-glutamate + acetyl-CoA = N-acetyl-L-glutamate + CoA + H(+). Its pathway is amino-acid biosynthesis; L-arginine biosynthesis; L-ornithine and N-acetyl-L-glutamate from L-glutamate and N(2)-acetyl-L-ornithine (cyclic): step 1/1. It participates in amino-acid biosynthesis; L-arginine biosynthesis; N(2)-acetyl-L-ornithine from L-glutamate: step 1/4. Functionally, catalyzes two activities which are involved in the cyclic version of arginine biosynthesis: the synthesis of N-acetylglutamate from glutamate and acetyl-CoA as the acetyl donor, and of ornithine by transacetylation between N(2)-acetylornithine and glutamate. This is Arginine biosynthesis bifunctional protein ArgJ from Pseudomonas syringae pv. tomato (strain ATCC BAA-871 / DC3000).